A 210-amino-acid chain; its full sequence is Thymidylate kinase (210 aa).

10–17 (GPEGAGKS) provides a ligand contact to ATP.

It belongs to the thymidylate kinase family.

It carries out the reaction dTMP + ATP = dTDP + ADP. Phosphorylation of dTMP to form dTDP in both de novo and salvage pathways of dTTP synthesis. In Ectopseudomonas mendocina (strain ymp) (Pseudomonas mendocina), this protein is Thymidylate kinase.